An 878-amino-acid chain; its full sequence is Aconitase htyD (878 aa).

Substrate contacts are provided by residues Gln-173 and 290 to 292 (DSH). [4Fe-4S] cluster is bound by residues Cys-472, Cys-535, and Cys-538. Residues Arg-558 and Arg-563 each coordinate substrate. The tract at residues 626 to 671 (IAIANQRTKPAPTMPAYVEPYRSFQPPVPPSSDQPQSMKDHGKTSN) is disordered. Residue 742–743 (SR) coordinates substrate.

It belongs to the aconitase/IPM isomerase family.

It functions in the pathway antifungal biosynthesis. Functionally, aconitase; part of the gene cluster that mediates the de novo generation of L-homotyrosine from acetyl-CoA and 4-hydroxyphenyl-pyruvate. L-homotyrosine is a building block of echinocandin B, a fungal lipidated cyclic hexapeptide that acts as an antifungal agent. L-homotyrosine 4-hydroxyphenyl-pyruvate first undergoes an aldol-type condensation by htyA with the C-2 of acetyl-CoA followed by the release of CoA to form 2-(4-hydroxybenzyl)-malate. This is followed by isomerization of 2-(4-hydroxy-benzyl)-malate to 3-(4-hydroxybenzyl)-malate by htyD. Thereafter, 3-(4-hydroxybenzyl)-malate undergoes decarboxylation and oxidation to form 2-oxo-4-(4-hydroxybenzyl)butanoic acid, coupled to reduction of NAD(+) to NADH by htyC. The product then undergoes transamination catalyzed by htyB to form L-homotyrosine. The protein is Aconitase htyD of Aspergillus rugulosus (Emericella rugulosa).